The chain runs to 257 residues: uncharacterized protein (257 aa).

Residues 7–27 (LFLCVSFLLITIFIGGGGFMN) traverse the membrane as a helical segment.

Belongs to the staphylococcal tandem lipoprotein family.

Its subcellular location is the cell membrane. This is an uncharacterized protein from Staphylococcus epidermidis (strain ATCC 12228 / FDA PCI 1200).